Reading from the N-terminus, the 221-residue chain is Phosphoribosylformylglycinamidine synthase subunit PurQ (221 aa).

The region spanning 8 to 221 (NVGIIRFPGT…GLKFFKSFLD (214 aa)) is the Glutamine amidotransferase type-1 domain. C91 serves as the catalytic Nucleophile. Active-site residues include H198 and E200.

As to quaternary structure, part of the FGAM synthase complex composed of 1 PurL, 1 PurQ and 2 PurS subunits.

The protein resides in the cytoplasm. It catalyses the reaction N(2)-formyl-N(1)-(5-phospho-beta-D-ribosyl)glycinamide + L-glutamine + ATP + H2O = 2-formamido-N(1)-(5-O-phospho-beta-D-ribosyl)acetamidine + L-glutamate + ADP + phosphate + H(+). The catalysed reaction is L-glutamine + H2O = L-glutamate + NH4(+). Its pathway is purine metabolism; IMP biosynthesis via de novo pathway; 5-amino-1-(5-phospho-D-ribosyl)imidazole from N(2)-formyl-N(1)-(5-phospho-D-ribosyl)glycinamide: step 1/2. Part of the phosphoribosylformylglycinamidine synthase complex involved in the purines biosynthetic pathway. Catalyzes the ATP-dependent conversion of formylglycinamide ribonucleotide (FGAR) and glutamine to yield formylglycinamidine ribonucleotide (FGAM) and glutamate. The FGAM synthase complex is composed of three subunits. PurQ produces an ammonia molecule by converting glutamine to glutamate. PurL transfers the ammonia molecule to FGAR to form FGAM in an ATP-dependent manner. PurS interacts with PurQ and PurL and is thought to assist in the transfer of the ammonia molecule from PurQ to PurL. In Methanosphaera stadtmanae (strain ATCC 43021 / DSM 3091 / JCM 11832 / MCB-3), this protein is Phosphoribosylformylglycinamidine synthase subunit PurQ.